The primary structure comprises 401 residues: 1-deoxy-D-xylulose 5-phosphate reductoisomerase (401 aa).

Thr-10, Gly-11, Ser-12, Ile-13, Asn-38, and Asn-124 together coordinate NADPH. Lys-125 contributes to the 1-deoxy-D-xylulose 5-phosphate binding site. Glu-126 is an NADPH binding site. Asp-150 contributes to the Mn(2+) binding site. 1-deoxy-D-xylulose 5-phosphate is bound by residues Ser-151, Glu-152, Ser-186, and His-209. Glu-152 lines the Mn(2+) pocket. Gly-215 contributes to the NADPH binding site. Positions 222, 227, 228, and 231 each coordinate 1-deoxy-D-xylulose 5-phosphate. Glu-231 contributes to the Mn(2+) binding site.

It belongs to the DXR family. Requires Mg(2+) as cofactor. The cofactor is Mn(2+).

It carries out the reaction 2-C-methyl-D-erythritol 4-phosphate + NADP(+) = 1-deoxy-D-xylulose 5-phosphate + NADPH + H(+). It participates in isoprenoid biosynthesis; isopentenyl diphosphate biosynthesis via DXP pathway; isopentenyl diphosphate from 1-deoxy-D-xylulose 5-phosphate: step 1/6. Its function is as follows. Catalyzes the NADPH-dependent rearrangement and reduction of 1-deoxy-D-xylulose-5-phosphate (DXP) to 2-C-methyl-D-erythritol 4-phosphate (MEP). The chain is 1-deoxy-D-xylulose 5-phosphate reductoisomerase from Vibrio campbellii (strain ATCC BAA-1116).